We begin with the raw amino-acid sequence, 200 residues long: 3-isopropylmalate dehydratase small subunit (200 aa).

The protein belongs to the LeuD family. LeuD type 1 subfamily. In terms of assembly, heterodimer of LeuC and LeuD.

It catalyses the reaction (2R,3S)-3-isopropylmalate = (2S)-2-isopropylmalate. It functions in the pathway amino-acid biosynthesis; L-leucine biosynthesis; L-leucine from 3-methyl-2-oxobutanoate: step 2/4. Functionally, catalyzes the isomerization between 2-isopropylmalate and 3-isopropylmalate, via the formation of 2-isopropylmaleate. In Pectobacterium atrosepticum (strain SCRI 1043 / ATCC BAA-672) (Erwinia carotovora subsp. atroseptica), this protein is 3-isopropylmalate dehydratase small subunit.